Reading from the N-terminus, the 105-residue chain is Phosphoribosyl-ATP pyrophosphatase (105 aa).

The protein belongs to the PRA-PH family.

The protein localises to the cytoplasm. It catalyses the reaction 1-(5-phospho-beta-D-ribosyl)-ATP + H2O = 1-(5-phospho-beta-D-ribosyl)-5'-AMP + diphosphate + H(+). The protein operates within amino-acid biosynthesis; L-histidine biosynthesis; L-histidine from 5-phospho-alpha-D-ribose 1-diphosphate: step 2/9. This is Phosphoribosyl-ATP pyrophosphatase from Methylococcus capsulatus (strain ATCC 33009 / NCIMB 11132 / Bath).